A 433-amino-acid chain; its full sequence is Protein disulfide-isomerase A6 homolog (433 aa).

The N-terminal stretch at 1 to 19 is a signal peptide; sequence MRQLASILLLAFVVGSVSA. Thioredoxin domains lie at 20–119 and 120–267; these read FYSP…GQRT and AKAI…KHVA. Active-site nucleophile residues include Cys-55, Cys-58, Cys-186, and Cys-189. 2 disulfides stabilise this stretch: Cys-55–Cys-58 and Cys-186–Cys-189. An N-linked (GlcNAc...) asparagine glycan is attached at Asn-279. The tract at residues 405-433 is disordered; that stretch reads VDPWDGKDGQLPTEEDIDLSDIDLDKDEL. Residues 417–433 are compositionally biased toward acidic residues; it reads TEEDIDLSDIDLDKDEL. The short motif at 430–433 is the Prevents secretion from ER element; sequence KDEL.

The protein belongs to the protein disulfide isomerase family. In terms of assembly, interacts with Drpr (via extracellular region). In the blastoderm embryo, expression starts at the anterior and posterior poles and later appears as broad stripes. Following gastrulation, expressed in midline precursor cells and the posterior head with low levels present throughout the embryo. During germ band extension, weak dorsoventral stripes of expression are evident. Midline expression begins and is retained throughout embryogenesis in clusters of cells in each segment in the central nervous system. At least some of the midline expression occurs in VUM neurons.

Its subcellular location is the endoplasmic reticulum lumen. The protein resides in the cell surface. The catalysed reaction is Catalyzes the rearrangement of -S-S- bonds in proteins.. Its function is as follows. Binds to both apoptotic cells and phagocytes and promotes Drpr-dependent phagocytosis of apoptotic cells. The sequence is that of Protein disulfide-isomerase A6 homolog from Drosophila melanogaster (Fruit fly).